The chain runs to 676 residues: Lon-like protease BrxL (676 aa).

The protein belongs to the BrxL family.

Its function is as follows. BREX systems (bacteriophage exclusion) provide immunity against bacteriophage. Part of a type 1 BREX system. This system allows phage adsorption but prevents phage DNA replication, without degradation of the phage DNA. Methylation of bacterial DNA by PglX probably guides self/non-self discrimination. When the brxA-brxB-brxC-pglX and pglZ-brxL operons are transformed into a susceptible B.subtilis strain (BEST7003) they confer resistance to bacteriophages SPbeta, SP16, Zeta, phi3T and SP02 and partial protection to phages SP01 and SP82G (these include lytic and temperate phage). They do not protect against phages phi105, rho10 or rho14. Additionally confers a very slight reduction in efficiency of plasmid transformation. This chain is Lon-like protease BrxL, found in Bacillus cereus (strain H3081.97).